The primary structure comprises 326 residues: N-acetyl-gamma-glutamyl-phosphate reductase (326 aa).

C155 is an active-site residue.

This sequence belongs to the NAGSA dehydrogenase family. Type 1 subfamily.

The protein localises to the cytoplasm. The catalysed reaction is N-acetyl-L-glutamate 5-semialdehyde + phosphate + NADP(+) = N-acetyl-L-glutamyl 5-phosphate + NADPH + H(+). Its pathway is amino-acid biosynthesis; L-arginine biosynthesis; N(2)-acetyl-L-ornithine from L-glutamate: step 3/4. Functionally, catalyzes the NADPH-dependent reduction of N-acetyl-5-glutamyl phosphate to yield N-acetyl-L-glutamate 5-semialdehyde. The sequence is that of N-acetyl-gamma-glutamyl-phosphate reductase from Shewanella frigidimarina (strain NCIMB 400).